A 98-amino-acid polypeptide reads, in one-letter code: Large ribosomal subunit protein uL23 (98 aa).

It belongs to the universal ribosomal protein uL23 family. Part of the 50S ribosomal subunit. Contacts protein L29, and trigger factor when it is bound to the ribosome.

One of the early assembly proteins it binds 23S rRNA. One of the proteins that surrounds the polypeptide exit tunnel on the outside of the ribosome. Forms the main docking site for trigger factor binding to the ribosome. The sequence is that of Large ribosomal subunit protein uL23 from Jannaschia sp. (strain CCS1).